Consider the following 517-residue polypeptide: MSSRSPDELLRIEGIRKTFPGVVALDSVDFDLRRGEVHVLLGENGAGKSTLIKMLSGAYTPDAGRILAGGEEVRIHGAQDSERLGIATIYQEFNLVPDLTVAENIFLGRQPRRLGMIDRKRMDADAEVLLKRVGVNVSPRARVRELGIARLQMVEIAKALSLDARVLIMDEPTAVLTSEEVDKLFAIVRRLREDGVGIVFITHHLEEIAALGDRVTVIRDGRSVGQVPASTPEDELVRLMVGRSIEQQYPRERTDAGEALLKVEGLTRDGVFHDVGFEVRAGEVVGIAGLVGAGRTEVVRAVFGADPYDAGTVHVAGAPLRRHDVNAAMAAGIGLVPEDRKGQGLVLDASVEENLGLVTLRSTARAGLVDLKGQHTAAERIAGQLGVRMAGLGQHVRTLSGGNQQKVVIGKWLLANTKVLILDEPTRGIDVGAKVEIYQLINELTAAGAAVLMISSDLPEVLGMSDRVVVMAQGRVAGELTAEQATQDAVMALAVSTHTGNSPHSGGTDGTEASRGH.

ABC transporter domains are found at residues L10–I245 and D255–H498. Residue G42–S49 coordinates ATP. The segment at T497–H517 is disordered.

It belongs to the ABC transporter superfamily. Ribose importer (TC 3.A.1.2.1) family. As to quaternary structure, the complex is composed of an ATP-binding protein (RbsA), two transmembrane proteins (RbsC) and a solute-binding protein (RbsB).

It is found in the cell membrane. The enzyme catalyses D-ribose(out) + ATP + H2O = D-ribose(in) + ADP + phosphate + H(+). In terms of biological role, part of the ABC transporter complex RbsABC involved in ribose import. Responsible for energy coupling to the transport system. This Streptomyces coelicolor (strain ATCC BAA-471 / A3(2) / M145) protein is Ribose import ATP-binding protein RbsA 2.